The sequence spans 375 residues: DNA replication and repair protein RecF (375 aa).

30 to 37 serves as a coordination point for ATP; it reads GLNGQGKT.

The protein belongs to the RecF family.

It localises to the cytoplasm. Functionally, the RecF protein is involved in DNA metabolism; it is required for DNA replication and normal SOS inducibility. RecF binds preferentially to single-stranded, linear DNA. It also seems to bind ATP. This Halothermothrix orenii (strain H 168 / OCM 544 / DSM 9562) protein is DNA replication and repair protein RecF.